A 339-amino-acid chain; its full sequence is D-erythrose-4-phosphate dehydrogenase (339 aa).

12–13 is an NAD(+) binding site; that stretch reads RI. Substrate-binding positions include 154–156, Arg200, 213–214, and Arg236; these read SCT and TK. Cys155 serves as the catalytic Nucleophile. Asn318 serves as a coordination point for NAD(+).

The protein belongs to the glyceraldehyde-3-phosphate dehydrogenase family. Epd subfamily. As to quaternary structure, homotetramer.

The protein localises to the cytoplasm. The enzyme catalyses D-erythrose 4-phosphate + NAD(+) + H2O = 4-phospho-D-erythronate + NADH + 2 H(+). It functions in the pathway cofactor biosynthesis; pyridoxine 5'-phosphate biosynthesis; pyridoxine 5'-phosphate from D-erythrose 4-phosphate: step 1/5. In terms of biological role, catalyzes the NAD-dependent conversion of D-erythrose 4-phosphate to 4-phosphoerythronate. The chain is D-erythrose-4-phosphate dehydrogenase from Enterobacter sp. (strain 638).